A 67-amino-acid chain; its full sequence is Large ribosomal subunit protein bL35 (67 aa).

A disordered region spans residues 1–20 (MPKLKTKSGAKKRFVPKKSG).

This sequence belongs to the bacterial ribosomal protein bL35 family.

The chain is Large ribosomal subunit protein bL35 from Anaeromyxobacter dehalogenans (strain 2CP-C).